Here is an 88-residue protein sequence, read N- to C-terminus: Large ribosomal subunit protein bL31B (88 aa).

It belongs to the bacterial ribosomal protein bL31 family. Type B subfamily. In terms of assembly, part of the 50S ribosomal subunit.

In Janthinobacterium sp. (strain Marseille) (Minibacterium massiliensis), this protein is Large ribosomal subunit protein bL31B.